We begin with the raw amino-acid sequence, 219 residues long: Probable GTP-binding protein EngB (219 aa).

In terms of domain architecture, EngB-type G spans 31-205 (VGVEIAFAGR…LSILNEWCHP (175 aa)). GTP is bound by residues 39–46 (GRSNAGKS), 66–70 (GRTQL), 84–87 (DLPG), 151–154 (TKSD), and 184–186 (FSA). Mg(2+) is bound by residues serine 46 and threonine 68.

The protein belongs to the TRAFAC class TrmE-Era-EngA-EngB-Septin-like GTPase superfamily. EngB GTPase family. Mg(2+) is required as a cofactor.

Its function is as follows. Necessary for normal cell division and for the maintenance of normal septation. In Shewanella sp. (strain W3-18-1), this protein is Probable GTP-binding protein EngB.